Reading from the N-terminus, the 500-residue chain is MEESLKPMDAEQLRENAHKMVDFIADYYKSIESFPVLSQVKPGYLRDLLPDSAPDHPESLEDVLEDIRQKIVPGVTHWQSPNYFAYYPSNSSVAGFLGEMISAGFNIVGFNWIASPAATELEVIVLDWLAKMLNLPNQFLSSGQGGGVIQGTASEANLVVLLAARDKFLNRFGKRSLEKLVVYASDQTHAAMKKACQIAGIYPENFRVLNADHTSNYALVPEALSDAISNDLSAGLIPFFLCATVGTTSSAAVDPLSELGKISKVNDMWFHVDAAYAGSACICPEYRHYIDGIEEAASFNMNAHKWFLTNFDCSLLWIKDRSALIQSLSTYPEYLKNKASQENSVVDFKDWQIPLGRRFRSLKLWMVLRLYGLENLQSYIRNHIKLAGQFEQLVCSDSRFEVVVPRTFSLVCFRLLPPPNHQDNGYKLNHSLLDAVNSSGKIFVSHTVLSGKYVIRFAVGAPLTEEEHIKQAWKVFQDQATILLAGSDGSDFGASNGDII.

2 repeat units span residues 65–122 (EDIR…TELE) and 125–176 (VLDW…GKRS). The interval 65–176 (EDIRQKIVPG…KFLNRFGKRS (112 aa)) is 2 X approximate tandem repeats. Ser-89 lines the substrate pocket. Ala-153 and Ser-154 together coordinate pyridoxal 5'-phosphate. His-189 serves as a coordination point for substrate. Positions 248 and 302 each coordinate pyridoxal 5'-phosphate. Lys-305 bears the N6-(pyridoxal phosphate)lysine mark.

Belongs to the group II decarboxylase family. The cofactor is pyridoxal 5'-phosphate. In terms of tissue distribution, mostly expressed in bulbs, and, to a lower extent, in stems, roots, leaves and flowers.

The catalysed reaction is L-tyrosine + H(+) = tyramine + CO2. Its pathway is alkaloid biosynthesis. In terms of biological role, catalyzes the decarboxylation of L-tyrosine to tyramine, which is converted to norbelladine, a precursor to all Amaryllidaceae alkaloids such as galanthamine, lycorine and haemanthamine, and including haemanthamine- and crinamine-type alkaloids, promising anticancer agents. The sequence is that of Tyrosine decarboxylase 2 from Narcissus pseudonarcissus (Daffodil).